The sequence spans 187 residues: Elongation factor P (187 aa).

This sequence belongs to the elongation factor P family.

The protein localises to the cytoplasm. Its pathway is protein biosynthesis; polypeptide chain elongation. In terms of biological role, involved in peptide bond synthesis. Stimulates efficient translation and peptide-bond synthesis on native or reconstituted 70S ribosomes in vitro. Probably functions indirectly by altering the affinity of the ribosome for aminoacyl-tRNA, thus increasing their reactivity as acceptors for peptidyl transferase. The polypeptide is Elongation factor P (Desulfatibacillum aliphaticivorans).